The sequence spans 749 residues: Disintegrin and metalloproteinase domain-containing protein 10 (749 aa).

Residues 1 to 18 (MVLPTVLILLLSWAAGLG) form the signal peptide. The propeptide occupies 19–214 (GQYGNPLNKY…MGPELLRKKR (196 aa)). The Cysteine switch signature appears at 171–178 (GGCADHSV). C173 is a binding site for Zn(2+). Residues 215-673 (TTLAERNTCQ…SPQLYENIAE (459 aa)) lie on the Extracellular side of the membrane. A Peptidase M12B domain is found at 221–457 (NTCQLYIQTD…KRNNCFVESG (237 aa)). Intrachain disulfides connect C223–C314, C345–C452, C400–C436, C461–C496, C472–C485, C474–C480, C484–C516, C504–C512, C511–C537, C525–C544, C531–C563, C556–C568, C573–C599, C581–C608, C583–C598, C595–C640, and C633–C646. N268 and N279 each carry an N-linked (GlcNAc...) asparagine glycan. H384 contributes to the Zn(2+) binding site. Residue E385 is part of the active site. Zn(2+) contacts are provided by H388 and H394. N-linked (GlcNAc...) asparagine glycosylation is present at N440. The Disintegrin domain occupies 458–552 (QPICGNGMVE…LCPASDPKPN (95 aa)). N552 carries N-linked (GlcNAc...) asparagine glycosylation. The chain crosses the membrane as a helical span at residues 674–697 (WIVAHWWAVLLMGIALIMLMAGFI). Residues 698–749 (KICSVHTPSSNPKLPPPKPLPGTLKRRRPPQPIQQPPRQRPRESYQMGHMRR) lie on the Cytoplasmic side of the membrane. The segment at 705–749 (PSSNPKLPPPKPLPGTLKRRRPPQPIQQPPRQRPRESYQMGHMRR) is disordered. The short motif at 709 to 716 (PKLPPPKP) is the SH3-binding element. At T720 the chain carries Phosphothreonine. The SH3-binding signature appears at 723–729 (RRRPPQP). The interaction with AP2A1, AP2A2 and AP2M1 stretch occupies residues 735-749 (RQRPRESYQMGHMRR).

In terms of assembly, forms a ternary EFNA5-EPHA3-ADAM10 complex mediating EFNA5 extracellular domain shedding by ADAM10 which regulates the EFNA5-EPHA3 complex internalization and function, the cleavage occurs in trans, with ADAM10 and its substrate being on the membranes of opposing cells. Interacts with the clathrin adapter AP2 complex subunits AP2A1, AP2A2, AP2B1, and AP2M1; this interaction facilitates ADAM10 endocytosis from the plasma membrane during long-term potentiation in hippocampal neurons. Forms a ternary complex composed of ADAM10, EPHA4 and CADH1; within the complex, ADAM10 cleaves CADH1 which disrupts adherens junctions. Interacts with EPHA2. Interacts with NGF in a divalent cation-dependent manner. Interacts with TSPAN14; the interaction promotes ADAM10 maturation and cell surface expression. Interacts with TSPAN5, TSPAN10, TSPAN14, TSPAN15, TSPAN17 and TSPAN33; these interactions regulate ADAM10 substrate specificity, endocytosis and turnover. Interacts (via extracellular domain) with TSPAN33 (via extracellular domain) and (via cytoplasmic domain) with AFDN; interaction with TSPAN33 allows the docking of ADAM10 to zonula adherens through a PDZ11-dependent interaction between TSPAN33 and PLEKHA7 while interaction with AFDN locks ADAM10 at zonula adherens. Interacts with DLG1; this interaction recruits ADAM10 to the cell membrane during long-term depression in hippocampal neurons. Interacts (via extracellular domain) with BACE1 (via extracellular domain). Interacts with FAM171A1. Zn(2+) serves as cofactor. In terms of processing, the precursor is cleaved by furin and PCSK7. In terms of tissue distribution, expressed in brain, kidney, lung, spleen, ovary and testis.

It localises to the cell membrane. The protein resides in the golgi apparatus membrane. It is found in the cytoplasmic vesicle. The protein localises to the clathrin-coated vesicle. Its subcellular location is the cell projection. It localises to the axon. The protein resides in the dendrite. It is found in the cell junction. The protein localises to the adherens junction. Its subcellular location is the cytoplasm. The catalysed reaction is Endopeptidase of broad specificity.. Catalytically inactive when the propeptide is intact and associated with the mature enzyme. The disintegrin and cysteine-rich regions modulate access of substrates to exerts an inhibitory effect on the cleavage of ADAM10 substrates. In terms of biological role, transmembrane metalloprotease which mediates the ectodomain shedding of a myriad of transmembrane proteins, including adhesion proteins, growth factor precursors and cytokines being essential for development and tissue homeostasis. Associates with six members of the tetraspanin superfamily TspanC8 which regulate its exit from the endoplasmic reticulum and its substrate selectivity. Cleaves the membrane-bound precursor of TNF-alpha at '76-Ala-|-Val-77' to its mature soluble form. Responsible for the proteolytical release of soluble JAM3 from endothelial cells surface. Responsible for the proteolytic release of several other cell-surface proteins, including heparin-binding epidermal growth-like factor, ephrin-A2, CD44, CDH2 and for constitutive and regulated alpha-secretase cleavage of amyloid precursor protein (APP). Contributes to the normal cleavage of the cellular prion protein. Involved in the cleavage of the adhesion molecule L1 at the cell surface and in released membrane vesicles, suggesting a vesicle-based protease activity. Also controls the proteolytic processing of Notch and mediates lateral inhibition during neurogenesis. Required for the development of type 1 transitional B cells into marginal zone B cells, probably by cleaving Notch. Responsible for the FasL ectodomain shedding and for the generation of the remnant ADAM10-processed FasL (FasL APL) transmembrane form. Also cleaves the ectodomain of the integral membrane proteins CORIN and ITM2B. Mediates the proteolytic cleavage of LAG3, leading to release the secreted form of LAG3. Mediates the proteolytic cleavage of IL6R and IL11RA, leading to the release of secreted forms of IL6R and IL11RA. Enhances the cleavage of CHL1 by BACE1. Cleaves NRCAM. Cleaves TREM2, resulting in shedding of the TREM2 ectodomain. Involved in the development and maturation of glomerular and coronary vasculature. During development of the cochlear organ of Corti, promotes pillar cell separation by forming a ternary complex with CADH1 and EPHA4 and cleaving CADH1 at adherens junctions. May regulate the EFNA5-EPHA3 signaling. Regulates leukocyte transmigration as a sheddase for the adherens junction protein VE-cadherin/CDH5 in endothelial cells. The protein is Disintegrin and metalloproteinase domain-containing protein 10 (Adam10) of Rattus norvegicus (Rat).